Here is a 207-residue protein sequence, read N- to C-terminus: Large ribosomal subunit protein uL3 (207 aa).

The segment at K113–A148 is disordered.

Belongs to the universal ribosomal protein uL3 family. In terms of assembly, part of the 50S ribosomal subunit. Forms a cluster with proteins L14 and L19.

One of the primary rRNA binding proteins, it binds directly near the 3'-end of the 23S rRNA, where it nucleates assembly of the 50S subunit. The polypeptide is Large ribosomal subunit protein uL3 (Lactococcus lactis subsp. lactis (strain IL1403) (Streptococcus lactis)).